The sequence spans 424 residues: Arginine biosynthesis bifunctional protein ArgJ (424 aa).

The substrate site is built by Thr166, Lys192, Thr203, Glu290, Asn419, and Thr424. The active-site Nucleophile is the Thr203.

It belongs to the ArgJ family. In terms of assembly, heterotetramer of two alpha and two beta chains.

Its subcellular location is the cytoplasm. It catalyses the reaction N(2)-acetyl-L-ornithine + L-glutamate = N-acetyl-L-glutamate + L-ornithine. It carries out the reaction L-glutamate + acetyl-CoA = N-acetyl-L-glutamate + CoA + H(+). It functions in the pathway amino-acid biosynthesis; L-arginine biosynthesis; L-ornithine and N-acetyl-L-glutamate from L-glutamate and N(2)-acetyl-L-ornithine (cyclic): step 1/1. The protein operates within amino-acid biosynthesis; L-arginine biosynthesis; N(2)-acetyl-L-ornithine from L-glutamate: step 1/4. In terms of biological role, catalyzes two activities which are involved in the cyclic version of arginine biosynthesis: the synthesis of N-acetylglutamate from glutamate and acetyl-CoA as the acetyl donor, and of ornithine by transacetylation between N(2)-acetylornithine and glutamate. This chain is Arginine biosynthesis bifunctional protein ArgJ, found in Colwellia psychrerythraea (strain 34H / ATCC BAA-681) (Vibrio psychroerythus).